Consider the following 161-residue polypeptide: Ragulator complex protein LAMTOR1 (161 aa).

A disordered region spans residues 1 to 43 (MGCCYSSENEDSDQDREERKLLLDPSSPPTKALNGAEPNYHSL). A lipid anchor (N-myristoyl glycine) is attached at G2. Residues C3 and C4 are each lipidated (S-palmitoyl cysteine). K20 participates in a covalent cross-link: Glycyl lysine isopeptide (Lys-Gly) (interchain with G-Cter in ubiquitin). S27 bears the Phosphoserine mark. A Glycyl lysine isopeptide (Lys-Gly) (interchain with G-Cter in ubiquitin) cross-link involves residue K31. S42 and S56 each carry phosphoserine. Residue K60 forms a Glycyl lysine isopeptide (Lys-Gly) (interchain with G-Cter in ubiquitin) linkage. Phosphoserine is present on S98. Glycyl lysine isopeptide (Lys-Gly) (interchain with G-Cter in ubiquitin) cross-links involve residues K103 and K104. The interval 121–161 (SEPIPFSDLQQVSRIAAYAYSALSQIRVDAKEELVVQFGIP) is interaction with LAMTOR2 and LAMTOR3. Phosphoserine is present on S141.

The protein belongs to the LAMTOR1 family. As to quaternary structure, part of the Ragulator complex composed of LAMTOR1, LAMTOR2, LAMTOR3, LAMTOR4 and LAMTOR5. LAMTOR4 and LAMTOR5 form a heterodimer that interacts, through LAMTOR1, with a LAMTOR2, LAMTOR3 heterodimer. Interacts with LAMTOR2 and LAMTOR3; the interaction is direct. The Ragulator complex interacts with both the mTORC1 complex and heterodimers constituted of the Rag GTPases RagA/RRAGA, RagB/RRAGB, RagC/RRAGC and RagD/RRAGD; regulated by amino acid availability. The Ragulator complex interacts with SLC38A9; the probable amino acid sensor. Component of the lysosomal folliculin complex (LFC), composed of FLCN, FNIP1 (or FNIP2), RagA/RRAGA or RagB/RRAGB GDP-bound, RagC/RRAGC or RagD/RRAGD GTP-bound, and Ragulator. Associates with the lysosomal V-ATPase complex; interaction promotes the guanine nucleotide exchange factor (GEF) of the Ragulator complex. Interacts with MMP14. Interacts with CDKN1B; prevents the interaction of CDKN1B with RHOA leaving RHOA in a form accessible to activation by ARHGEF2. Interacts with PIP4P1. Post-translationally, N-terminal myristoylation and palmitoylation mediates its recruitment to lysosome membranes, thereby promoting localization of the Ragulator complex to lysosomes. N-myristoylation by NMT1 is required for palmitoylation at Cys-3 and Cys-4. May be palmitoylated by ZDHHC3. In terms of processing, ubiquitinated at Lys-60, Lys-103 and Lys-104 by UBE3A, promoting its degradation by the proteasome. Ubiquitination at Lys-20 impairs the association with the lysosomal V-ATPase complex. Deubiquitination at Lys-20 by USP32 promotes the association with the lysosomal V-ATPase complex and subsequent activation of the mTORC1 complex.

The protein resides in the lysosome membrane. It is found in the late endosome membrane. Its function is as follows. Key component of the Ragulator complex, a multiprotein complex involved in amino acid sensing and activation of mTORC1, a signaling complex promoting cell growth in response to growth factors, energy levels, and amino acids. Activated by amino acids through a mechanism involving the lysosomal V-ATPase, the Ragulator plays a dual role for the small GTPases Rag (RagA/RRAGA, RagB/RRAGB, RagC/RRAGC and/or RagD/RRAGD): it (1) acts as a guanine nucleotide exchange factor (GEF), activating the small GTPases Rag and (2) mediates recruitment of Rag GTPases to the lysosome membrane. Activated Ragulator and Rag GTPases function as a scaffold recruiting mTORC1 to lysosomes where it is in turn activated. LAMTOR1 is directly responsible for anchoring the Ragulator complex to the lysosomal membrane. LAMTOR1 wraps around the other subunits of the Ragulator complex to hold them in place and interacts with the Rag GTPases, thereby playing a key role in the recruitment of the mTORC1 complex to lysosomes. Also involved in the control of embryonic stem cells differentiation via non-canonical RagC/RRAGC and RagD/RRAGD activation: together with FLCN, it is necessary to recruit and activate RagC/RRAGC and RagD/RRAGD at the lysosomes, and to induce exit of embryonic stem cells from pluripotency via non-canonical, mTOR-independent TFE3 inactivation. Also required for late endosomes/lysosomes biogenesis it may regulate both the recycling of receptors through endosomes and the MAPK signaling pathway through recruitment of some of its components to late endosomes. May be involved in cholesterol homeostasis regulating LDL uptake and cholesterol release from late endosomes/lysosomes. May also play a role in RHOA activation. The chain is Ragulator complex protein LAMTOR1 from Homo sapiens (Human).